We begin with the raw amino-acid sequence, 391 residues long: Polyketide synthase 1 (391 aa).

C164 is a catalytic residue.

This sequence belongs to the thiolase-like superfamily. Chalcone/stilbene synthases family. As to quaternary structure, homodimer. As to expression, expressed in fruits.

The enzyme catalyses (E)-4-coumaroyl-CoA + 3 malonyl-CoA + 3 H(+) = 2',4,4',6'-tetrahydroxychalcone + 3 CO2 + 4 CoA. The protein operates within secondary metabolite biosynthesis; flavonoid biosynthesis. Its function is as follows. Polyketide synthase producing naringenin chalcone and slightly p-coumaryltriacetic acid lactone (CTAL). Can use p-coumaryl-CoA as substrate. The polypeptide is Polyketide synthase 1 (PKS1) (Rubus idaeus (Raspberry)).